A 219-amino-acid chain; its full sequence is 7-cyano-7-deazaguanine synthase (219 aa).

Residue 11-21 (FSGGQDSTTCL) coordinates ATP. Residues Cys-188, Cys-196, Cys-199, and Cys-202 each contribute to the Zn(2+) site.

Belongs to the QueC family. Zn(2+) serves as cofactor.

The enzyme catalyses 7-carboxy-7-deazaguanine + NH4(+) + ATP = 7-cyano-7-deazaguanine + ADP + phosphate + H2O + H(+). It functions in the pathway purine metabolism; 7-cyano-7-deazaguanine biosynthesis. Its function is as follows. Catalyzes the ATP-dependent conversion of 7-carboxy-7-deazaguanine (CDG) to 7-cyano-7-deazaguanine (preQ(0)). The protein is 7-cyano-7-deazaguanine synthase of Glaesserella parasuis serovar 5 (strain SH0165) (Haemophilus parasuis).